The sequence spans 270 residues: Shikimate dehydrogenase (NADP(+)) (270 aa).

Residues Ser14–Ser16 and Thr61 contribute to the shikimate site. Lys65 functions as the Proton acceptor in the catalytic mechanism. Asp77 serves as a coordination point for NADP(+). Residues Asn86 and Asp101 each coordinate shikimate. Residues Gly125–Ala129 and Ile210 each bind NADP(+). A shikimate-binding site is contributed by Tyr212. Gly233 provides a ligand contact to NADP(+).

Belongs to the shikimate dehydrogenase family. As to quaternary structure, homodimer.

It carries out the reaction shikimate + NADP(+) = 3-dehydroshikimate + NADPH + H(+). Its pathway is metabolic intermediate biosynthesis; chorismate biosynthesis; chorismate from D-erythrose 4-phosphate and phosphoenolpyruvate: step 4/7. Its function is as follows. Involved in the biosynthesis of the chorismate, which leads to the biosynthesis of aromatic amino acids. Catalyzes the reversible NADPH linked reduction of 3-dehydroshikimate (DHSA) to yield shikimate (SA). This is Shikimate dehydrogenase (NADP(+)) from Clostridium beijerinckii (strain ATCC 51743 / NCIMB 8052) (Clostridium acetobutylicum).